A 647-amino-acid chain; its full sequence is DNA mismatch repair protein MutL (647 aa).

The protein belongs to the DNA mismatch repair MutL/HexB family.

In terms of biological role, this protein is involved in the repair of mismatches in DNA. It is required for dam-dependent methyl-directed DNA mismatch repair. May act as a 'molecular matchmaker', a protein that promotes the formation of a stable complex between two or more DNA-binding proteins in an ATP-dependent manner without itself being part of a final effector complex. The sequence is that of DNA mismatch repair protein MutL from Bacillus thuringiensis subsp. konkukian (strain 97-27).